We begin with the raw amino-acid sequence, 122 residues long: Large ribosomal subunit protein uL14c (122 aa).

The protein belongs to the universal ribosomal protein uL14 family. In terms of assembly, part of the 50S ribosomal subunit.

The protein localises to the plastid. The protein resides in the cyanelle. In terms of biological role, binds to 23S rRNA. In Cyanophora paradoxa, this protein is Large ribosomal subunit protein uL14c.